A 335-amino-acid polypeptide reads, in one-letter code: DNA polymerase beta (335 aa).

Residue Lys41 forms a Glycyl lysine isopeptide (Lys-Gly) (interchain with G-Cter in ubiquitin) linkage. Residue Lys60 participates in K(+) binding. Lys60 provides a ligand contact to Na(+). Lys61 participates in a covalent cross-link: Glycyl lysine isopeptide (Lys-Gly) (interchain with G-Cter in ubiquitin). The K(+) site is built by Leu62 and Val65. Residues Leu62 and Val65 each coordinate Na(+). Residue Lys72 is the Nucleophile; Schiff-base intermediate with DNA; for 5'-dRP lyase activity of the active site. Residue Lys72 is modified to N6-acetyllysine. Lys81 participates in a covalent cross-link: Glycyl lysine isopeptide (Lys-Gly) (interchain with G-Cter in ubiquitin). Arg83 is modified (omega-N-methylarginine; by PRMT6). 3 residues coordinate K(+): Thr101, Val103, and Ile106. Positions 101, 103, and 106 each coordinate Na(+). Arg149 contributes to the a 2'-deoxyribonucleoside 5'-triphosphate binding site. Position 152 is an omega-N-methylarginine; by PRMT6 (Arg152). A 2'-deoxyribonucleoside 5'-triphosphate contacts are provided by Ser180, Arg183, Gly189, and Asp190. Positions 183 to 192 (RGAESSGDMD) are DNA-binding. Positions 190, 192, and 256 each coordinate Mg(2+).

It belongs to the DNA polymerase type-X family. As to quaternary structure, monomer. Binds single-stranded DNA (ssDNA). Interacts with APEX1, LIG1, LIG3, FEN1, PCNA and XRCC1. Interacts with HUWE1/ARF-BP1, STUB1/CHIP and USP47. Interacts with FAM168A. It depends on Mg(2+) as a cofactor. In terms of processing, methylation by PRMT6 stimulates the polymerase activity by enhancing DNA binding and processivity. Post-translationally, ubiquitinated at Lys-41, Lys-61 and Lys-81: monoubiquitinated by HUWE1/ARF-BP1. Monoubiquitinated protein is then the target of STUB1/CHIP, which catalyzes polyubiquitination from monoubiquitin, leading to degradation by the proteasome. USP47 mediates the deubiquitination of monoubiquitinated protein, preventing polyubiquitination by STUB1/CHIP and its subsequent degradation.

The protein resides in the nucleus. Its subcellular location is the cytoplasm. The enzyme catalyses DNA(n) + a 2'-deoxyribonucleoside 5'-triphosphate = DNA(n+1) + diphosphate. The catalysed reaction is a 5'-end 2'-deoxyribose-2'-deoxyribonucleotide-DNA = (2E,4S)-4-hydroxypenten-2-al-5-phosphate + a 5'-end 5'-phospho-2'-deoxyribonucleoside-DNA + H(+). It carries out the reaction 2'-deoxyribonucleotide-(2'-deoxyribose 5'-phosphate)-2'-deoxyribonucleotide-DNA = a 3'-end 2'-deoxyribonucleotide-(2,3-dehydro-2,3-deoxyribose 5'-phosphate)-DNA + a 5'-end 5'-phospho-2'-deoxyribonucleoside-DNA + H(+). Its function is as follows. Repair polymerase that plays a key role in base-excision repair. During this process, the damaged base is excised by specific DNA glycosylases, the DNA backbone is nicked at the abasic site by an apurinic/apyrimidic (AP) endonuclease, and POLB removes 5'-deoxyribose-phosphate from the preincised AP site acting as a 5'-deoxyribose-phosphate lyase (5'-dRP lyase); through its DNA polymerase activity, it adds one nucleotide to the 3' end of the arising single-nucleotide gap. Conducts 'gap-filling' DNA synthesis in a stepwise distributive fashion rather than in a processive fashion as for other DNA polymerases. It is also able to cleave sugar-phosphate bonds 3' to an intact AP site, acting as an AP lyase. The chain is DNA polymerase beta (POLB) from Bos taurus (Bovine).